Reading from the N-terminus, the 94-residue chain is MSRSTKKGPYVDEKLFEKMQKLNKTGDRKVVKTWARASVITPEFVGHTIAIHNGKKFFPIFISEQMVGHKLGEFAPTRTFKGHGGMTKQETSLV.

It belongs to the universal ribosomal protein uS19 family.

Its function is as follows. Protein S19 forms a complex with S13 that binds strongly to the 16S ribosomal RNA. The chain is Small ribosomal subunit protein uS19 from Endomicrobium trichonymphae.